Reading from the N-terminus, the 475-residue chain is Ribosomal protein uS12 methylthiotransferase RimO (475 aa).

In terms of domain architecture, MTTase N-terminal spans 36–150 (NKINFISLGC…ILKAVQSTQK (115 aa)). Residues Cys-45, Cys-81, Cys-113, Cys-185, Cys-189, and Cys-192 each coordinate [4Fe-4S] cluster. The Radical SAM core domain occupies 171 to 403 (STPKHYAYLK…MQVQKKVVKK (233 aa)). A TRAM domain is found at 406 to 475 (KKMIGKKIAV…ADYDLVGHVI (70 aa)).

It belongs to the methylthiotransferase family. RimO subfamily. [4Fe-4S] cluster serves as cofactor.

Its subcellular location is the cytoplasm. The enzyme catalyses L-aspartate(89)-[ribosomal protein uS12]-hydrogen + (sulfur carrier)-SH + AH2 + 2 S-adenosyl-L-methionine = 3-methylsulfanyl-L-aspartate(89)-[ribosomal protein uS12]-hydrogen + (sulfur carrier)-H + 5'-deoxyadenosine + L-methionine + A + S-adenosyl-L-homocysteine + 2 H(+). Its function is as follows. Catalyzes the methylthiolation of an aspartic acid residue of ribosomal protein uS12. The sequence is that of Ribosomal protein uS12 methylthiotransferase RimO from Protochlamydia amoebophila (strain UWE25).